The chain runs to 453 residues: Tubulin delta chain (453 aa).

143–149 contacts GTP; the sequence is AGGTGSG.

Belongs to the tubulin family. In terms of assembly, found in a complex with TEDC1, TEDC2, TUBE1 and TUBD1.

It localises to the nucleus. Its subcellular location is the cytoplasm. The protein resides in the cytoskeleton. It is found in the microtubule organizing center. The protein localises to the centrosome. It localises to the centriole. Its subcellular location is the cell projection. The protein resides in the cilium. Its function is as follows. Acts as a positive regulator of hedgehog signaling and regulates ciliary function. This chain is Tubulin delta chain (TUBD1), found in Homo sapiens (Human).